The chain runs to 256 residues: MIKRVNKLVLGISLLFLVISITAGCGMGKEAEIKKSFEKTLSMYPIKNLEDLYDKEGYRDDQFDKNDKGTWIVNSQMAIQNKGEALKIKGMLLKIDRNTRSAKGFYYTNEIKTEKYEVAQDNQKKYPVKMINNKFISTEEVKEENIKKEIENFKFFAQYSNFKDLMNYKDGDISYNPEVPSYSAQYQLTNDDYNVKQLRKRYDIPTNKAPKLLLKGTGNLKGSSVGYKKIEFTFLENKNENIYFTDSLHLEPSEDK.

An N-terminal signal peptide occupies residues 1-24 (MIKRVNKLVLGISLLFLVISITAG). A lipid anchor (N-palmitoyl cysteine) is attached at Cys-25. Residue Cys-25 is the site of S-diacylglycerol cysteine attachment.

This sequence belongs to the staphylococcal tandem lipoprotein family.

The protein localises to the cell membrane. This is an uncharacterized protein from Staphylococcus aureus (strain NCTC 8325 / PS 47).